The sequence spans 340 residues: Ribonucleoside-diphosphate reductase subunit beta (340 aa).

Residues Asp-88 and His-122 each coordinate Fe cation. Tyr-126 is an active-site residue. His-216 lines the Fe cation pocket.

This sequence belongs to the ribonucleoside diphosphate reductase small chain family. As to quaternary structure, tetramer of two alpha and two beta subunits. It depends on Fe cation as a cofactor.

It carries out the reaction a 2'-deoxyribonucleoside 5'-diphosphate + [thioredoxin]-disulfide + H2O = a ribonucleoside 5'-diphosphate + [thioredoxin]-dithiol. Its function is as follows. Provides the precursors necessary for DNA synthesis. Catalyzes the biosynthesis of deoxyribonucleotides from the corresponding ribonucleotides. The chain is Ribonucleoside-diphosphate reductase subunit beta (nrdF) from Mycoplasma genitalium (strain ATCC 33530 / DSM 19775 / NCTC 10195 / G37) (Mycoplasmoides genitalium).